The sequence spans 209 residues: Imidazole glycerol phosphate synthase subunit HisH (209 aa).

Residues 1–205 (MIAIIDYGMG…KGVVETWKSS (205 aa)) form the Glutamine amidotransferase type-1 domain. Catalysis depends on cysteine 79, which acts as the Nucleophile. Residues histidine 180 and glutamate 182 contribute to the active site.

Heterodimer of HisH and HisF.

The protein resides in the cytoplasm. The enzyme catalyses 5-[(5-phospho-1-deoxy-D-ribulos-1-ylimino)methylamino]-1-(5-phospho-beta-D-ribosyl)imidazole-4-carboxamide + L-glutamine = D-erythro-1-(imidazol-4-yl)glycerol 3-phosphate + 5-amino-1-(5-phospho-beta-D-ribosyl)imidazole-4-carboxamide + L-glutamate + H(+). It catalyses the reaction L-glutamine + H2O = L-glutamate + NH4(+). The protein operates within amino-acid biosynthesis; L-histidine biosynthesis; L-histidine from 5-phospho-alpha-D-ribose 1-diphosphate: step 5/9. In terms of biological role, IGPS catalyzes the conversion of PRFAR and glutamine to IGP, AICAR and glutamate. The HisH subunit catalyzes the hydrolysis of glutamine to glutamate and ammonia as part of the synthesis of IGP and AICAR. The resulting ammonia molecule is channeled to the active site of HisF. The sequence is that of Imidazole glycerol phosphate synthase subunit HisH from Bacillus thuringiensis (strain Al Hakam).